A 390-amino-acid chain; its full sequence is Protein DDI1 homolog (390 aa).

D205 is a catalytic residue. The disordered stretch occupies residues M322–V344. Positions P330–P343 are enriched in low complexity.

This sequence belongs to the DDI1 family.

Its subcellular location is the cytoplasm. With respect to regulation, inhibited by pepstatin, diazoacetyl-DL-norleucine methyl ester (DAN) and nelfinavir. Inhibited by the proteinase inhibitors lopinavir and ritonavir. In terms of biological role, aspartic protease. This is Protein DDI1 homolog from Leishmania major.